Consider the following 227-residue polypeptide: MNIHRECRSLLSLIQIVSGNLPTGGFSYSKGLESAIEYGWVKSLEDFLNWQKQWIHEQLIYIDWPMLKRCYYYTKINDSKNFKKCALQILSYRDTYELRLEEQRRGKAMEKLISQWYDPISDSWAVAFKCSGLASMAWLGYEWNIPIKNLALGYAYNALESSIMVGLKLLPFGQRTAQKLLRYLVEFLPNAWDKADLVKDHEVGGNFLLQSIASACHEDQYSRLFSS.

It belongs to the UreF family. In terms of assembly, ureD, UreF and UreG form a complex that acts as a GTP-hydrolysis-dependent molecular chaperone, activating the urease apoprotein by helping to assemble the nickel containing metallocenter of UreC. The UreE protein probably delivers the nickel.

The protein localises to the cytoplasm. Its function is as follows. Required for maturation of urease via the functional incorporation of the urease nickel metallocenter. This Blochmanniella floridana protein is Urease accessory protein UreF.